The chain runs to 197 residues: Peptide deformylase (197 aa).

Fe cation-binding residues include C106 and H148. The active site involves E149. H152 provides a ligand contact to Fe cation.

It belongs to the polypeptide deformylase family. The cofactor is Fe(2+).

It catalyses the reaction N-terminal N-formyl-L-methionyl-[peptide] + H2O = N-terminal L-methionyl-[peptide] + formate. Functionally, removes the formyl group from the N-terminal Met of newly synthesized proteins. Requires at least a dipeptide for an efficient rate of reaction. N-terminal L-methionine is a prerequisite for activity but the enzyme has broad specificity at other positions. The sequence is that of Peptide deformylase from Mycolicibacterium gilvum (strain PYR-GCK) (Mycobacterium gilvum (strain PYR-GCK)).